Consider the following 418-residue polypeptide: UDP-N-acetylglucosamine 1-carboxyvinyltransferase (418 aa).

Lys22 to Asn23 is a phosphoenolpyruvate binding site. Arg92 is a UDP-N-acetyl-alpha-D-glucosamine binding site. Cys116 functions as the Proton donor in the catalytic mechanism. At Cys116 the chain carries 2-(S-cysteinyl)pyruvic acid O-phosphothioketal. Residues Arg121 to Leu125, Asp305, and Leu327 contribute to the UDP-N-acetyl-alpha-D-glucosamine site.

Belongs to the EPSP synthase family. MurA subfamily.

Its subcellular location is the cytoplasm. The enzyme catalyses phosphoenolpyruvate + UDP-N-acetyl-alpha-D-glucosamine = UDP-N-acetyl-3-O-(1-carboxyvinyl)-alpha-D-glucosamine + phosphate. The protein operates within cell wall biogenesis; peptidoglycan biosynthesis. Cell wall formation. Adds enolpyruvyl to UDP-N-acetylglucosamine. The chain is UDP-N-acetylglucosamine 1-carboxyvinyltransferase from Campylobacter jejuni subsp. doylei (strain ATCC BAA-1458 / RM4099 / 269.97).